The following is a 476-amino-acid chain: Bifunctional protein HldE (476 aa).

A ribokinase region spans residues 1–318; that stretch reads MKPILPDYNS…AEAVHGSQDT (318 aa). Residue 195–198 participates in ATP binding; the sequence is NMKE. Asp-264 is a catalytic residue. Positions 344–476 are cytidylyltransferase; the sequence is MTNGCFDILH…IINAIKGGKG (133 aa).

The protein in the N-terminal section; belongs to the carbohydrate kinase PfkB family. It in the C-terminal section; belongs to the cytidylyltransferase family. In terms of assembly, homodimer.

It carries out the reaction D-glycero-beta-D-manno-heptose 7-phosphate + ATP = D-glycero-beta-D-manno-heptose 1,7-bisphosphate + ADP + H(+). The catalysed reaction is D-glycero-beta-D-manno-heptose 1-phosphate + ATP + H(+) = ADP-D-glycero-beta-D-manno-heptose + diphosphate. The protein operates within nucleotide-sugar biosynthesis; ADP-L-glycero-beta-D-manno-heptose biosynthesis; ADP-L-glycero-beta-D-manno-heptose from D-glycero-beta-D-manno-heptose 7-phosphate: step 1/4. Its pathway is nucleotide-sugar biosynthesis; ADP-L-glycero-beta-D-manno-heptose biosynthesis; ADP-L-glycero-beta-D-manno-heptose from D-glycero-beta-D-manno-heptose 7-phosphate: step 3/4. It participates in bacterial outer membrane biogenesis; LPS core biosynthesis. In terms of biological role, catalyzes the phosphorylation of D-glycero-D-manno-heptose 7-phosphate at the C-1 position to selectively form D-glycero-beta-D-manno-heptose-1,7-bisphosphate. Its function is as follows. Catalyzes the ADP transfer from ATP to D-glycero-beta-D-manno-heptose 1-phosphate, yielding ADP-D-glycero-beta-D-manno-heptose. The chain is Bifunctional protein HldE from Vibrio parahaemolyticus serotype O3:K6 (strain RIMD 2210633).